The sequence spans 311 residues: Formimidoylglutamase (311 aa).

Mn(2+)-binding residues include His-122, Asp-151, His-153, Asp-155, Cys-242, and Asp-244.

Belongs to the arginase family. It depends on Mn(2+) as a cofactor.

The enzyme catalyses N-formimidoyl-L-glutamate + H2O = formamide + L-glutamate. The protein operates within amino-acid degradation; L-histidine degradation into L-glutamate; L-glutamate from N-formimidoyl-L-glutamate (hydrolase route): step 1/1. Functionally, catalyzes the conversion of N-formimidoyl-L-glutamate to L-glutamate and formamide. The protein is Formimidoylglutamase of Pseudomonas aeruginosa (strain UCBPP-PA14).